The chain runs to 574 residues: Septation ring formation regulator EzrA (574 aa).

The Extracellular segment spans residues 1-7 (MSNGLII). A helical membrane pass occupies residues 8–26 (LIIVIAVALILAYVAAVVL). The Cytoplasmic portion of the chain corresponds to 27–574 (RKRNETLLDS…YEKTRENIRF (548 aa)). 3 coiled-coil regions span residues 104–141 (LKAKHAIDSIESQINLVEEDIELIREALADLEKQEAKN), 267–424 (NITQ…QKVN), and 456–524 (ASDH…SIQE).

The protein belongs to the EzrA family.

Its subcellular location is the cell membrane. Negative regulator of FtsZ ring formation; modulates the frequency and position of FtsZ ring formation. Inhibits FtsZ ring formation at polar sites. Interacts either with FtsZ or with one of its binding partners to promote depolymerization. This chain is Septation ring formation regulator EzrA, found in Streptococcus gordonii (strain Challis / ATCC 35105 / BCRC 15272 / CH1 / DL1 / V288).